Consider the following 69-residue polypeptide: Conotoxin Eb6.20 (69 aa).

An N-terminal signal peptide occupies residues 1 to 17 (VLIIAVLFLTACQLTTA). The propeptide occupies 18–41 (ETYSRGRQKHRARRSTDKNSKWTR). Intrachain disulfides connect Cys-43-Cys-57, Cys-50-Cys-61, and Cys-56-Cys-68.

Belongs to the conotoxin O1 superfamily. In terms of tissue distribution, expressed by the venom duct.

It localises to the secreted. In Conus ebraeus (Hebrew cone), this protein is Conotoxin Eb6.20 (E1).